The sequence spans 516 residues: Histidine ammonia-lyase 1 (516 aa).

Residues 147–149 constitute a cross-link (5-imidazolinone (Ser-Gly)); sequence SSG. Position 148 is a 2,3-didehydroalanine (Ser) (S148).

Belongs to the PAL/histidase family. Contains an active site 4-methylidene-imidazol-5-one (MIO), which is formed autocatalytically by cyclization and dehydration of residues Ser-Ser-Gly.

The protein localises to the cytoplasm. It catalyses the reaction L-histidine = trans-urocanate + NH4(+). The protein operates within amino-acid degradation; L-histidine degradation into L-glutamate; N-formimidoyl-L-glutamate from L-histidine: step 1/3. The polypeptide is Histidine ammonia-lyase 1 (hutH1) (Fusobacterium nucleatum subsp. nucleatum (strain ATCC 25586 / DSM 15643 / BCRC 10681 / CIP 101130 / JCM 8532 / KCTC 2640 / LMG 13131 / VPI 4355)).